The following is a 132-amino-acid chain: tRNA (cytidine(56)-2'-O)-methyltransferase (132 aa).

Residues L35, G65–V69, and I83–E90 each bind S-adenosyl-L-methionine.

Belongs to the aTrm56 family. Homodimer.

The protein localises to the cytoplasm. It catalyses the reaction cytidine(56) in tRNA + S-adenosyl-L-methionine = 2'-O-methylcytidine(56) in tRNA + S-adenosyl-L-homocysteine + H(+). Specifically catalyzes the AdoMet-dependent 2'-O-ribose methylation of cytidine at position 56 in tRNAs. The chain is tRNA (cytidine(56)-2'-O)-methyltransferase from Sulfolobus acidocaldarius (strain ATCC 33909 / DSM 639 / JCM 8929 / NBRC 15157 / NCIMB 11770).